Consider the following 227-residue polypeptide: PKHD-type hydroxylase BamMC406_4714 (227 aa).

A Fe2OG dioxygenase domain is found at 78 to 178 (KVFPPLFNRY…RVASFFWIQS (101 aa)). Positions 96, 98, and 159 each coordinate Fe cation. Arginine 169 provides a ligand contact to 2-oxoglutarate.

Fe(2+) serves as cofactor. Requires L-ascorbate as cofactor.

This chain is PKHD-type hydroxylase BamMC406_4714, found in Burkholderia ambifaria (strain MC40-6).